The chain runs to 296 residues: GTP-binding protein GEM (296 aa).

Disordered regions lie at residues 1 to 20 (MTLN…PQQQ) and 37 to 68 (PHQY…SVIS). Residues 57-68 (SWSSDSTDSVIS) show a composition bias toward low complexity. Residues 82 to 89 (GEQGVGKS) and 191 to 194 (NKSD) each bind GTP. Residues 266–285 (ARRFWGKIVAKNNKNMAFKL) form a calmodulin-binding region.

The protein belongs to the small GTPase superfamily. RGK family. Interacts with calmodulin in a Ca(2+)-dependent manner. Binds ROCK1. Post-translationally, phosphorylated on tyrosine residues. Most abundant in thymus, spleen, kidney, lung, and testis. Less abundant in heart, brain, liver and skeletal muscle.

Its subcellular location is the cell membrane. In terms of biological role, could be a regulatory protein, possibly participating in receptor-mediated signal transduction at the plasma membrane. Has guanine nucleotide-binding activity but undetectable intrinsic GTPase activity. The sequence is that of GTP-binding protein GEM (GEM) from Homo sapiens (Human).